The following is a 418-amino-acid chain: Phospho-N-acetylmuramoyl-pentapeptide-transferase (418 aa).

10 consecutive transmembrane segments (helical) span residues 22-42 (YISF…VLIG), 72-92 (TPTM…LLLA), 95-115 (SNIY…LGLI), 135-155 (IIAQ…SPNI), 208-228 (AATW…VSNG), 244-264 (AIIG…GFAA), 277-297 (LTVF…HNAF), 302-322 (FMGD…AIII), 326-346 (LLLP…MIQV), and 395-415 (KIVV…VVTL).

This sequence belongs to the glycosyltransferase 4 family. MraY subfamily. It depends on Mg(2+) as a cofactor.

The protein resides in the cell inner membrane. The catalysed reaction is UDP-N-acetyl-alpha-D-muramoyl-L-alanyl-gamma-D-glutamyl-meso-2,6-diaminopimeloyl-D-alanyl-D-alanine + di-trans,octa-cis-undecaprenyl phosphate = di-trans,octa-cis-undecaprenyl diphospho-N-acetyl-alpha-D-muramoyl-L-alanyl-D-glutamyl-meso-2,6-diaminopimeloyl-D-alanyl-D-alanine + UMP. Its pathway is cell wall biogenesis; peptidoglycan biosynthesis. Its function is as follows. Catalyzes the initial step of the lipid cycle reactions in the biosynthesis of the cell wall peptidoglycan: transfers peptidoglycan precursor phospho-MurNAc-pentapeptide from UDP-MurNAc-pentapeptide onto the lipid carrier undecaprenyl phosphate, yielding undecaprenyl-pyrophosphoryl-MurNAc-pentapeptide, known as lipid I. This is Phospho-N-acetylmuramoyl-pentapeptide-transferase from Azobacteroides pseudotrichonymphae genomovar. CFP2.